The primary structure comprises 916 residues: Transmembrane channel-like protein 2-A (916 aa).

Residues 1–13 (MPKKSDTTRKLED) show a composition bias toward basic and acidic residues. The segment at 1-159 (MPKKSDTTRK…DEEDESMSEG (159 aa)) is disordered. The Cytoplasmic portion of the chain corresponds to 1-271 (MPKKSDTTRK…IFLRWMYGMN (271 aa)). Residues 14 to 26 (VGIEIDGDVDSAE) are compositionally biased toward acidic residues. 2 stretches are compositionally biased toward basic residues: residues 31 to 45 (SKGK…GKRG) and 62 to 72 (KGRRAANKKKP). The span at 97 to 107 (NVRERGDGDKK) shows a compositional bias: basic and acidic residues. Residues 108-117 (KSGKKGRRGG) are compositionally biased toward basic residues. Residues 118–138 (KKNEKGKGKDSDKDSDKDEKK) are compositionally biased toward basic and acidic residues. Over residues 145 to 157 (DESDSDEEDESMS) the composition is skewed to acidic residues. Residues 272–292 (LVLFSLTFGLVVIPEVLMGLP) traverse the membrane as a helical segment. Over 293-344 (YGSIPRKTVPREDQDTAMDYSVLTDFNGYCKYSVLFYGYYNNQRTIGFLKFR) the chain is Extracellular. A helical membrane pass occupies residues 345-365 (LPLSYLMVGIGTFGYSLMVVI). Residues 366–438 (RTMAKNADVG…ENIHLRRFLR (73 aa)) lie on the Cytoplasmic side of the membrane. Residues 439 to 459 (VLANFLITCTLGGSGYLIYFV) form a helical membrane-spanning segment. The Extracellular portion of the chain corresponds to 460–478 (VKRSQEFQNMDNLSWYEKN). Residues 479–499 (ELEIIMSLLGLVGPMLFETIA) form a helical membrane-spanning segment. At 500–516 (ELEEYHPRIALKWQLGR) the chain is on the cytoplasmic side. A helical transmembrane segment spans residues 517–537 (IFALFLGNLYTFLLALFDEVN). Over 538 to 649 (AKLEEEESIK…EFDISGNVLG (112 aa)) the chain is Extracellular. The chain crosses the membrane as a helical span at residues 650-670 (LVFNQGMIWMGAFYAPGLVGI). Topologically, residues 671 to 704 (NVLRLLSSMYYQCWAVMACNVPHERVFKASKSNN) are cytoplasmic. A helical membrane pass occupies residues 705 to 725 (FYMGLLLLILFLSLLPVVYTI). Over 726–762 (MSLPPSFDCGPFSGKERMFDVVMETIDLDLPAFMGTL) the chain is Extracellular. Residues 763–783 (FGYVANPGLVISAVLLMVLAI) form a helical membrane-spanning segment. Topologically, residues 784–916 (YYLNSVSEAY…RGQGPPPRRQ (133 aa)) are cytoplasmic. Over residues 804–818 (MQMARDEEKNRRNNK) the composition is skewed to basic and acidic residues. The interval 804-916 (MQMARDEEKN…RGQGPPPRRQ (113 aa)) is disordered. The span at 883 to 892 (ARGPVTRAPG) shows a compositional bias: low complexity.

The protein belongs to the TMC family. In terms of assembly, interacts (via N-terminus) with both isoforms CD1 and CD3 of PCDH15A (via cytoplasmic domain); this interaction is required for mechanotransduction of the hair cells and correct localization of PCDH15A in hair bundles of the hair cells. In adults, expression is restricted to the hair cells of inner ear and lateral line organ. Expressed at higher levels in the larval inner ear than in the lateral-line neuromasts.

It is found in the cell membrane. The catalysed reaction is Ca(2+)(in) = Ca(2+)(out). Functionally, pore-forming subunit of the mechanotransducer (MET) non-selective cation channel complex located at tips of hair-cell stereocilia. Highly permeable to calcium and likely transports monovalent cations. The sequence is that of Transmembrane channel-like protein 2-A from Danio rerio (Zebrafish).